Consider the following 290-residue polypeptide: Pyridoxal kinase PdxY (290 aa).

Residues S12 and 47-48 each bind substrate; that span reads TQ. ATP contacts are provided by residues D114, E151, K184, and 211 to 214; that span reads RPLL. D225 is a binding site for substrate.

Belongs to the pyridoxine kinase family. PdxY subfamily. In terms of assembly, homodimer. It depends on Mg(2+) as a cofactor.

It carries out the reaction pyridoxal + ATP = pyridoxal 5'-phosphate + ADP + H(+). It participates in cofactor metabolism; pyridoxal 5'-phosphate salvage; pyridoxal 5'-phosphate from pyridoxal: step 1/1. Pyridoxal kinase involved in the salvage pathway of pyridoxal 5'-phosphate (PLP). Catalyzes the phosphorylation of pyridoxal to PLP. This chain is Pyridoxal kinase PdxY, found in Pseudomonas putida (strain ATCC 47054 / DSM 6125 / CFBP 8728 / NCIMB 11950 / KT2440).